Here is a 67-residue protein sequence, read N- to C-terminus: MGVEVLGGIFSKRFTSIVGSFIWFIITPILLYLPWPLAMLGFLTLYGALPFGVGIVNWPYPRDACGC.

This is an uncharacterized protein from Thermoproteus tenax virus 1 (strain KRA1) (TTV1).